A 295-amino-acid polypeptide reads, in one-letter code: Acetylglutamate kinase (295 aa).

Substrate-binding positions include 66–67 (GG), Arg88, and Asn193.

Belongs to the acetylglutamate kinase family. ArgB subfamily.

It localises to the cytoplasm. It carries out the reaction N-acetyl-L-glutamate + ATP = N-acetyl-L-glutamyl 5-phosphate + ADP. It participates in amino-acid biosynthesis; L-arginine biosynthesis; N(2)-acetyl-L-ornithine from L-glutamate: step 2/4. Functionally, catalyzes the ATP-dependent phosphorylation of N-acetyl-L-glutamate. This chain is Acetylglutamate kinase, found in Rhizobium johnstonii (strain DSM 114642 / LMG 32736 / 3841) (Rhizobium leguminosarum bv. viciae).